The following is a 108-amino-acid chain: uncharacterized protein (108 aa).

The signal sequence occupies residues 1 to 24; the sequence is MNLWEFRFGKSFLFIPNFIMKVLA.

To M.jannaschii MJ0803.

This is an uncharacterized protein from Methanocaldococcus jannaschii (strain ATCC 43067 / DSM 2661 / JAL-1 / JCM 10045 / NBRC 100440) (Methanococcus jannaschii).